Consider the following 176-residue polypeptide: Ribosome rescue factor SmrB (176 aa).

One can recognise a Smr domain in the interval 97-172; sequence LDMHGMTQQE…GDGALLVLLS (76 aa).

The protein belongs to the SmrB family. Associates with collided ribosomes, but not with correctly translating polysomes.

Acts as a ribosome collision sensor. Detects stalled/collided disomes (pairs of ribosomes where the leading ribosome is stalled and a second ribosome has collided with it) and endonucleolytically cleaves mRNA at the 5' boundary of the stalled ribosome. Stalled/collided disomes form a new interface (primarily via the 30S subunits) that binds SmrB. Cleaved mRNA becomes available for tmRNA ligation, leading to ribosomal subunit dissociation and rescue of stalled ribosomes. In Vibrio vulnificus (strain YJ016), this protein is Ribosome rescue factor SmrB.